The following is a 573-amino-acid chain: 2-succinyl-5-enolpyruvyl-6-hydroxy-3-cyclohexene-1-carboxylate synthase (573 aa).

Belongs to the TPP enzyme family. MenD subfamily. Homodimer. Mg(2+) serves as cofactor. Mn(2+) is required as a cofactor. The cofactor is thiamine diphosphate.

The catalysed reaction is isochorismate + 2-oxoglutarate + H(+) = 5-enolpyruvoyl-6-hydroxy-2-succinyl-cyclohex-3-ene-1-carboxylate + CO2. Its pathway is quinol/quinone metabolism; 1,4-dihydroxy-2-naphthoate biosynthesis; 1,4-dihydroxy-2-naphthoate from chorismate: step 2/7. It participates in quinol/quinone metabolism; menaquinone biosynthesis. Its function is as follows. Catalyzes the thiamine diphosphate-dependent decarboxylation of 2-oxoglutarate and the subsequent addition of the resulting succinic semialdehyde-thiamine pyrophosphate anion to isochorismate to yield 2-succinyl-5-enolpyruvyl-6-hydroxy-3-cyclohexene-1-carboxylate (SEPHCHC). In Shewanella oneidensis (strain ATCC 700550 / JCM 31522 / CIP 106686 / LMG 19005 / NCIMB 14063 / MR-1), this protein is 2-succinyl-5-enolpyruvyl-6-hydroxy-3-cyclohexene-1-carboxylate synthase.